The primary structure comprises 507 residues: DNA replication licensing factor MCM6 (507 aa).

Positions 32 to 239 (LYHNLCTSLF…TDYAIARRIV (208 aa)) constitute an MCM domain. ATP is bound by residues His-45, Ser-85, Thr-86, Ala-87, Lys-88, Ser-89, and Asn-190. The Arginine finger motif lies at 214-217 (SRFD). Positions 305 and 308 each coordinate ADP. Residue Lys-329 is modified to N6-acetyllysine. The interval 365-392 (GPGGINGHADSPAPVNGFNGSGEDASQE) is disordered. Phosphoserine occurs at positions 375, 390, and 448. Thr-477 is modified (phosphothreonine).

It belongs to the MCM family. As to quaternary structure, component of the MCM2-7 complex. The complex forms a toroidal hexameric ring with the proposed subunit order MCM2-MCM6-MCM4-MCM7-MCM3-MCM5. Component of the CMG helicase complex, a hexameric ring of related MCM2-7 subunits stabilized by CDC45 and the tetrameric GINS complex. May interact with MCM10. Interacts with TIPIN. Interacts with CDT1. Interacts with MCMBP. Interacts with DDI2. Post-translationally, O-glycosylated (O-GlcNAcylated), in a cell cycle-dependent manner.

The protein resides in the nucleus. It localises to the chromosome. It catalyses the reaction ATP + H2O = ADP + phosphate + H(+). Acts as a component of the MCM2-7 complex (MCM complex) which is the replicative helicase essential for 'once per cell cycle' DNA replication initiation and elongation in eukaryotic cells. Core component of CDC45-MCM-GINS (CMG) helicase, the molecular machine that unwinds template DNA during replication, and around which the replisome is built. The active ATPase sites in the MCM2-7 ring are formed through the interaction surfaces of two neighboring subunits such that a critical structure of a conserved arginine finger motif is provided in trans relative to the ATP-binding site of the Walker A box of the adjacent subunit. The six ATPase active sites, however, are likely to contribute differentially to the complex helicase activity. The polypeptide is DNA replication licensing factor MCM6 (Mcm6) (Rattus norvegicus (Rat)).